Here is a 59-residue protein sequence, read N- to C-terminus: Protein translocase subunit SecE (59 aa).

A helical membrane pass occupies residues 33-53; that stretch reads GAGIALVGLLGFIIFAVMTFV.

This sequence belongs to the SecE/SEC61-gamma family. Component of the Sec protein translocase complex. Heterotrimer consisting of SecY (alpha), SecG (beta) and SecE (gamma) subunits. The heterotrimers can form oligomers, although 1 heterotrimer is thought to be able to translocate proteins. Interacts with the ribosome. May interact with SecDF, and other proteins may be involved.

The protein resides in the cell membrane. Its function is as follows. Essential subunit of the Sec protein translocation channel SecYEG. Clamps together the 2 halves of SecY. May contact the channel plug during translocation. This is Protein translocase subunit SecE from Haloarcula marismortui (strain ATCC 43049 / DSM 3752 / JCM 8966 / VKM B-1809) (Halobacterium marismortui).